A 505-amino-acid polypeptide reads, in one-letter code: Protein nucleotidyltransferase YdiU (505 aa).

ATP contacts are provided by glycine 102, glycine 104, arginine 105, lysine 125, aspartate 137, glycine 138, arginine 188, and arginine 195. Aspartate 264 (proton acceptor) is an active-site residue. Mg(2+) contacts are provided by asparagine 265 and aspartate 274. Aspartate 274 contacts ATP.

Belongs to the SELO family. Mg(2+) serves as cofactor. The cofactor is Mn(2+).

The catalysed reaction is L-seryl-[protein] + ATP = 3-O-(5'-adenylyl)-L-seryl-[protein] + diphosphate. The enzyme catalyses L-threonyl-[protein] + ATP = 3-O-(5'-adenylyl)-L-threonyl-[protein] + diphosphate. It carries out the reaction L-tyrosyl-[protein] + ATP = O-(5'-adenylyl)-L-tyrosyl-[protein] + diphosphate. It catalyses the reaction L-histidyl-[protein] + UTP = N(tele)-(5'-uridylyl)-L-histidyl-[protein] + diphosphate. The catalysed reaction is L-seryl-[protein] + UTP = O-(5'-uridylyl)-L-seryl-[protein] + diphosphate. The enzyme catalyses L-tyrosyl-[protein] + UTP = O-(5'-uridylyl)-L-tyrosyl-[protein] + diphosphate. Nucleotidyltransferase involved in the post-translational modification of proteins. It can catalyze the addition of adenosine monophosphate (AMP) or uridine monophosphate (UMP) to a protein, resulting in modifications known as AMPylation and UMPylation. The sequence is that of Protein nucleotidyltransferase YdiU from Nitrobacter winogradskyi (strain ATCC 25391 / DSM 10237 / CIP 104748 / NCIMB 11846 / Nb-255).